We begin with the raw amino-acid sequence, 173 residues long: Acireductone dioxygenase 1 (173 aa).

The Fe(2+) site is built by His96, His98, Glu102, and His140. Ni(2+) contacts are provided by His96, His98, Glu102, and His140.

It belongs to the acireductone dioxygenase (ARD) family. As to quaternary structure, monomer. It depends on Fe(2+) as a cofactor. The cofactor is Ni(2+).

It carries out the reaction 1,2-dihydroxy-5-(methylsulfanyl)pent-1-en-3-one + O2 = 3-(methylsulfanyl)propanoate + CO + formate + 2 H(+). The catalysed reaction is 1,2-dihydroxy-5-(methylsulfanyl)pent-1-en-3-one + O2 = 4-methylsulfanyl-2-oxobutanoate + formate + 2 H(+). It participates in amino-acid biosynthesis; L-methionine biosynthesis via salvage pathway; L-methionine from S-methyl-5-thio-alpha-D-ribose 1-phosphate: step 5/6. In terms of biological role, catalyzes 2 different reactions between oxygen and the acireductone 1,2-dihydroxy-3-keto-5-methylthiopentene (DHK-MTPene) depending upon the metal bound in the active site. Fe-containing acireductone dioxygenase (Fe-ARD) produces formate and 2-keto-4-methylthiobutyrate (KMTB), the alpha-ketoacid precursor of methionine in the methionine recycle pathway. Ni-containing acireductone dioxygenase (Ni-ARD) produces methylthiopropionate, carbon monoxide and formate, and does not lie on the methionine recycle pathway. In Pectobacterium atrosepticum (strain SCRI 1043 / ATCC BAA-672) (Erwinia carotovora subsp. atroseptica), this protein is Acireductone dioxygenase 1.